The chain runs to 317 residues: Protoheme IX farnesyltransferase (317 aa).

Transmembrane regions (helical) follow at residues 43-63, 65-85, 119-139, 140-160, 168-188, 195-215, 238-258, 261-281, and 292-312; these read PISV…AGAT, PVSG…CAGA, ALYW…NLNP, IAWI…SLWL, IVIG…AVTG, VLIA…LAIF, LNWL…IYFV, WGLV…ALSV, and AWVL…SMMV.

Belongs to the UbiA prenyltransferase family. Protoheme IX farnesyltransferase subfamily. In terms of assembly, interacts with CtaA.

The protein resides in the cell membrane. It carries out the reaction heme b + (2E,6E)-farnesyl diphosphate + H2O = Fe(II)-heme o + diphosphate. It functions in the pathway porphyrin-containing compound metabolism; heme O biosynthesis; heme O from protoheme: step 1/1. Functionally, converts heme B (protoheme IX) to heme O by substitution of the vinyl group on carbon 2 of heme B porphyrin ring with a hydroxyethyl farnesyl side group. This is Protoheme IX farnesyltransferase from Desulforudis audaxviator (strain MP104C).